Consider the following 89-residue polypeptide: Small ribosomal subunit protein uS14 (89 aa).

It belongs to the universal ribosomal protein uS14 family. Part of the 30S ribosomal subunit. Contacts proteins S3 and S10.

In terms of biological role, binds 16S rRNA, required for the assembly of 30S particles and may also be responsible for determining the conformation of the 16S rRNA at the A site. The protein is Small ribosomal subunit protein uS14 of Aster yellows witches'-broom phytoplasma (strain AYWB).